We begin with the raw amino-acid sequence, 367 residues long: AdoMet-dependent heme synthase (367 aa).

Positions 15 to 238 constitute a Radical SAM core domain; that stretch reads DGSPTCKLIA…TSMHLKATCA (224 aa). [4Fe-4S] cluster contacts are provided by Cys31, Cys35, and Cys38.

It belongs to the radical SAM superfamily. Requires [4Fe-4S] cluster as cofactor.

The enzyme catalyses Fe-coproporphyrin III + 2 S-adenosyl-L-methionine = heme b + 2 5'-deoxyadenosine + 2 L-methionine + 2 CO2. The protein operates within porphyrin-containing compound metabolism; protoheme biosynthesis. Functionally, involved in siroheme-dependent heme b biosynthesis. Catalyzes the conversion of Fe-coproporphyrin III into heme by the oxidative decarboxylation of two propionate side chains. In Nitratidesulfovibrio vulgaris (strain ATCC 29579 / DSM 644 / CCUG 34227 / NCIMB 8303 / VKM B-1760 / Hildenborough) (Desulfovibrio vulgaris), this protein is AdoMet-dependent heme synthase.